The following is a 410-amino-acid chain: Probable peptidoglycan glycosyltransferase FtsW (410 aa).

A run of 9 helical transmembrane segments spans residues 39-59 (LDPLLIWSATGLLLIGLVMVY), 78-98 (YFLLRHAMFLAVGIGAGLAAF), 108-128 (FAPWLFLIGVMLLVVVLIPGV), 177-197 (GFLPMAAMILLVGFLLLGEPD), 198-218 (FGAFVVITAIAFGVLFLGGIN), 221-241 (VFALLALVAVIGFMLLIWLSP), 303-323 (IAEELGFAGVLTVIALFAILI), 342-362 (GLVAMGIGLWLGVQSFINMGV), and 374-394 (LPLMSFGGSGIVANCLALAIL).

It belongs to the SEDS family. FtsW subfamily.

The protein localises to the cell inner membrane. The catalysed reaction is [GlcNAc-(1-&gt;4)-Mur2Ac(oyl-L-Ala-gamma-D-Glu-L-Lys-D-Ala-D-Ala)](n)-di-trans,octa-cis-undecaprenyl diphosphate + beta-D-GlcNAc-(1-&gt;4)-Mur2Ac(oyl-L-Ala-gamma-D-Glu-L-Lys-D-Ala-D-Ala)-di-trans,octa-cis-undecaprenyl diphosphate = [GlcNAc-(1-&gt;4)-Mur2Ac(oyl-L-Ala-gamma-D-Glu-L-Lys-D-Ala-D-Ala)](n+1)-di-trans,octa-cis-undecaprenyl diphosphate + di-trans,octa-cis-undecaprenyl diphosphate + H(+). The protein operates within cell wall biogenesis; peptidoglycan biosynthesis. Its function is as follows. Peptidoglycan polymerase that is essential for cell division. In Aromatoleum aromaticum (strain DSM 19018 / LMG 30748 / EbN1) (Azoarcus sp. (strain EbN1)), this protein is Probable peptidoglycan glycosyltransferase FtsW.